Here is a 220-residue protein sequence, read N- to C-terminus: Probable chemoreceptor glutamine deamidase CheD 2 (220 aa).

Belongs to the CheD family.

It catalyses the reaction L-glutaminyl-[protein] + H2O = L-glutamyl-[protein] + NH4(+). Probably deamidates glutamine residues to glutamate on methyl-accepting chemotaxis receptors (MCPs), playing an important role in chemotaxis. The chain is Probable chemoreceptor glutamine deamidase CheD 2 from Methanosarcina acetivorans (strain ATCC 35395 / DSM 2834 / JCM 12185 / C2A).